A 255-amino-acid polypeptide reads, in one-letter code: uncharacterized protein (255 aa).

Positions 4 to 59 constitute an HTH deoR-type domain; that stretch reads RNERLNLIRKRVDQYGQVAVKDLAIFLQVTPETVRKDLETLENDKLITRTHGGAIQ. Positions 21-40 form a DNA-binding region, H-T-H motif; sequence VAVKDLAIFLQVTPETVRKD.

This is an uncharacterized protein from Staphylococcus epidermidis (strain ATCC 12228 / FDA PCI 1200).